The chain runs to 478 residues: Ribosome biogenesis protein NOP53 (478 aa).

Residues 1-10 (MAAGGSGVGG) show a composition bias toward gly residues. The segment at 1 to 51 (MAAGGSGVGGKRSSKSDADSGFLGLRPTSVDPALRRRRRGPRNKKRGWRRL) is disordered. An N-acetylalanine modification is found at alanine 2. Serine 29 carries the phosphoserine modification. Over residues 35–49 (RRRRRGPRNKKRGWR) the composition is skewed to basic residues. 2 positions are modified to phosphoserine: serine 93 and serine 305. Residues 148 to 431 (KEQLWEKLAK…SELTDSLRTL (284 aa)) are mediates interaction with CDKN2A/isoform tumor suppressor ARF. A mediates interaction with NF2 region spans residues 181 to 478 (KPGPQDTVER…EKRAFREIQL (298 aa)). A disordered region spans residues 303 to 344 (EESDGEGEPGQGEGPEAGDAEVCPTPARLATTEKKTEQQRRR). The span at 333–342 (TTEKKTEQQR) shows a compositional bias: basic and acidic residues. A mediates interaction with human herpesvirus 8 protein ORF16 region spans residues 342–386 (RRREKAVHRLRVQQAALRAARLRHQELFRLRGIKAQVALRLAELA). 2 nucleolar localization signal regions span residues 347–395 (AVHR…RQAR) and 396–478 (REAE…EIQL).

It belongs to the NOP53 family. As to quaternary structure, homooligomer. Interacts with PTEN; regulates PTEN phosphorylation and increases its stability. Interacts with RPL11; retains RPL11 into the nucleolus. Interacts with CDKN2A/isoform tumor suppressor ARF; the interaction is direct and promotes ARF nucleoplasmic relocalization and ubiquitin-mediated proteasomal degradation. Interacts with NPM1; the interaction is direct and competitive with MYC. Interacts with NF2 (via FERM domain); the interaction is direct. Interacts with p53/TP53 (via the oligomerization region); the interaction is direct and may prevent the MDM2-mediated proteasomal degradation of p53/TP53. Interacts with RIGI; may regulate RIGI through USP15-mediated 'Lys-63'-linked deubiquitination. Interacts with UBTF. In terms of assembly, (Microbial infection) Interacts with herpes simplex virus 1 early proteins ICP22 and ICP0. (Microbial infection) Interacts with Human herpesvirus 8 protein ORF16; may sequester ORF16 in host nucleolus and reduce its antiapoptotic activity. Post-translationally, ubiquitin-mediated proteasomal degradation is regulated by c-JUN. It is associated with relocalization to the nucleoplasm and decreased homooligomerization. In terms of processing, phosphorylated upon DNA damage probably by ATM and DNA-PK; may regulate NOP53 degradation. In terms of tissue distribution, expressed at high levels in heart and pancreas, moderate levels in placenta, liver, skeletal muscle, and kidney, and low levels in brain and lung.

It is found in the nucleus. The protein localises to the nucleolus. It localises to the nucleoplasm. Its function is as follows. Nucleolar protein which is involved in the integration of the 5S RNP into the ribosomal large subunit during ribosome biogenesis. In ribosome biogenesis, may also play a role in rRNA transcription. Also functions as a nucleolar sensor that regulates the activation of p53/TP53 in response to ribosome biogenesis perturbation, DNA damage and other stress conditions. DNA damage or perturbation of ribosome biogenesis disrupt the interaction between NOP53 and RPL11 allowing RPL11 transport to the nucleoplasm where it can inhibit MDM2 and allow p53/TP53 activation. It may also positively regulate the function of p53/TP53 in cell cycle arrest and apoptosis through direct interaction, preventing its MDM2-dependent ubiquitin-mediated proteasomal degradation. Originally identified as a tumor suppressor, it may also play a role in cell proliferation and apoptosis by positively regulating the stability of PTEN, thereby antagonizing the PI3K-AKT/PKB signaling pathway. May also inhibit cell proliferation and increase apoptosis through its interaction with NF2. May negatively regulate NPM1 by regulating its nucleoplasmic localization, oligomerization and ubiquitin-mediated proteasomal degradation. Thereby, may prevent NPM1 interaction with MYC and negatively regulate transcription mediated by the MYC-NPM1 complex. May also regulate cellular aerobic respiration. In the cellular response to viral infection, may play a role in the attenuation of interferon-beta through the inhibition of RIGI. The chain is Ribosome biogenesis protein NOP53 from Homo sapiens (Human).